A 187-amino-acid chain; its full sequence is MILLIDNYDSFTWNLYQYFCELGAEVLVRRNDELTLADIISLAPAKIVISPGPCTPDESGISLAAIRHFSGQTPILGVCLGHQAIAQVFGAAIVRAAKVMHGKTSPVSHTGQGVFLGLNNPLTVTRYHSLLIDPRTLPECFEVTARSEEGEIMGIRHRVFDLEGVQFHPESILSEQGHQLLANFLNR.

The Glutamine amidotransferase type-1 domain maps to 1–187 (MILLIDNYDS…HQLLANFLNR (187 aa)). Catalysis depends on residues Cys-79, His-168, and Glu-170.

Monomer. Heterodimer consisting of two non-identical subunits: a glutamine amidotransferase subunit (PabA) and a aminodeoxychorismate synthase subunit (PabB).

The enzyme catalyses chorismate + L-glutamine = 4-amino-4-deoxychorismate + L-glutamate. Its pathway is cofactor biosynthesis; tetrahydrofolate biosynthesis; 4-aminobenzoate from chorismate: step 1/2. Part of a heterodimeric complex that catalyzes the two-step biosynthesis of 4-amino-4-deoxychorismate (ADC), a precursor of p-aminobenzoate (PABA) and tetrahydrofolate. In the first step, a glutamine amidotransferase (PabA) generates ammonia as a substrate that, along with chorismate, is used in the second step, catalyzed by aminodeoxychorismate synthase (PabB) to produce ADC. PabA converts glutamine into glutamate only in the presence of stoichiometric amounts of PabB. This chain is Aminodeoxychorismate synthase component 2 (pabA), found in Klebsiella aerogenes (Enterobacter aerogenes).